A 547-amino-acid polypeptide reads, in one-letter code: CTP synthase (547 aa).

Residues 1-265 (MARYVFITGG…DQAVLDAFGI (265 aa)) form an amidoligase domain region. Residue S13 coordinates CTP. S13 is a binding site for UTP. Residues 14-19 (SLGKGL) and D71 contribute to the ATP site. The Mg(2+) site is built by D71 and E139. CTP-binding positions include 146–148 (DIE), 186–191 (KTKPTQ), and K222. Residues 186-191 (KTKPTQ) and K222 each bind UTP. One can recognise a Glutamine amidotransferase type-1 domain in the interval 291 to 546 (RVAIVGKYTQ…VRAAVEVSRL (256 aa)). An L-glutamine-binding site is contributed by G353. C380 serves as the catalytic Nucleophile; for glutamine hydrolysis. L-glutamine-binding positions include 381 to 384 (LGMQ), E404, and R474. Catalysis depends on residues H519 and E521.

The protein belongs to the CTP synthase family. Homotetramer.

The enzyme catalyses UTP + L-glutamine + ATP + H2O = CTP + L-glutamate + ADP + phosphate + 2 H(+). It catalyses the reaction L-glutamine + H2O = L-glutamate + NH4(+). It carries out the reaction UTP + NH4(+) + ATP = CTP + ADP + phosphate + 2 H(+). The protein operates within pyrimidine metabolism; CTP biosynthesis via de novo pathway; CTP from UDP: step 2/2. With respect to regulation, allosterically activated by GTP, when glutamine is the substrate; GTP has no effect on the reaction when ammonia is the substrate. The allosteric effector GTP functions by stabilizing the protein conformation that binds the tetrahedral intermediate(s) formed during glutamine hydrolysis. Inhibited by the product CTP, via allosteric rather than competitive inhibition. In terms of biological role, catalyzes the ATP-dependent amination of UTP to CTP with either L-glutamine or ammonia as the source of nitrogen. Regulates intracellular CTP levels through interactions with the four ribonucleotide triphosphates. This chain is CTP synthase, found in Cereibacter sphaeroides (strain ATCC 17029 / ATH 2.4.9) (Rhodobacter sphaeroides).